A 206-amino-acid chain; its full sequence is Small ribosomal subunit protein uS4 (206 aa).

Residues threonine 96–lysine 156 enclose the S4 RNA-binding domain.

It belongs to the universal ribosomal protein uS4 family. Part of the 30S ribosomal subunit. Contacts protein S5. The interaction surface between S4 and S5 is involved in control of translational fidelity.

In terms of biological role, one of the primary rRNA binding proteins, it binds directly to 16S rRNA where it nucleates assembly of the body of the 30S subunit. Functionally, with S5 and S12 plays an important role in translational accuracy. This Shewanella halifaxensis (strain HAW-EB4) protein is Small ribosomal subunit protein uS4.